The following is a 193-amino-acid chain: MTIKLIVGLANPGNKYLLTRHNVGSWYVNQLANNYHVSLINKSSFLGYTGYLNIGKRRIFLLIPTIFMNYNGQAVAAIAKFYNIMPEEILIAHDELNFLPGYARFKYSGGHGGHNGLKDVIYRLGDNNNFYRLRIGIGHPGDKNKVIKFVLDTPLDTEQQLIQHAINESVLCTSLMFQQNIAYAIHQLHTILK.

TRNA is bound at residue Y16. The Proton acceptor role is filled by H21. Residues F67, N69, and N115 each coordinate tRNA.

The protein belongs to the PTH family. As to quaternary structure, monomer.

It is found in the cytoplasm. The enzyme catalyses an N-acyl-L-alpha-aminoacyl-tRNA + H2O = an N-acyl-L-amino acid + a tRNA + H(+). Hydrolyzes ribosome-free peptidyl-tRNAs (with 1 or more amino acids incorporated), which drop off the ribosome during protein synthesis, or as a result of ribosome stalling. In terms of biological role, catalyzes the release of premature peptidyl moieties from peptidyl-tRNA molecules trapped in stalled 50S ribosomal subunits, and thus maintains levels of free tRNAs and 50S ribosomes. This chain is Peptidyl-tRNA hydrolase, found in Baumannia cicadellinicola subsp. Homalodisca coagulata.